Consider the following 179-residue polypeptide: Cell division protein ZapC (179 aa).

The protein belongs to the ZapC family. Interacts directly with FtsZ.

Its subcellular location is the cytoplasm. Functionally, contributes to the efficiency of the cell division process by stabilizing the polymeric form of the cell division protein FtsZ. Acts by promoting interactions between FtsZ protofilaments and suppressing the GTPase activity of FtsZ. The polypeptide is Cell division protein ZapC (Photobacterium profundum (strain SS9)).